Here is a 317-residue protein sequence, read N- to C-terminus: Probable cell division protein WhiA (317 aa).

A DNA-binding region (H-T-H motif) is located at residues 276–310 (TLKELGEMVSGGKISKSGINHRLRKIDDIAEKLRA).

The protein belongs to the WhiA family.

In terms of biological role, involved in cell division and chromosome segregation. The chain is Probable cell division protein WhiA from Bacillus thuringiensis (strain Al Hakam).